We begin with the raw amino-acid sequence, 208 residues long: Thymidylate kinase (208 aa).

10–17 (GPEGSGKT) serves as a coordination point for ATP.

This sequence belongs to the thymidylate kinase family.

The catalysed reaction is dTMP + ATP = dTDP + ADP. In terms of biological role, phosphorylation of dTMP to form dTDP in both de novo and salvage pathways of dTTP synthesis. The chain is Thymidylate kinase from Bacillus cereus (strain ATCC 14579 / DSM 31 / CCUG 7414 / JCM 2152 / NBRC 15305 / NCIMB 9373 / NCTC 2599 / NRRL B-3711).